The sequence spans 146 residues: Large ribosomal subunit protein bL19 (146 aa).

It belongs to the bacterial ribosomal protein bL19 family.

In terms of biological role, this protein is located at the 30S-50S ribosomal subunit interface and may play a role in the structure and function of the aminoacyl-tRNA binding site. This Bartonella quintana (strain Toulouse) (Rochalimaea quintana) protein is Large ribosomal subunit protein bL19.